The chain runs to 104 residues: MSTKKKPTITKQELYSLVAADTQLNKALIERIFTSQQKIIQNALKHNQEVIIPPGIKFTVVTVKAKPARQGHNPATGEPIQIKAKPEHKAVKIRALKPVHDMLN.

Belongs to the bacterial histone-like protein family. As to quaternary structure, homodimer.

The protein resides in the virion. Stilbene derivatives SD1 and SD4 disrupt the binding between pA104R and DNA and inhibit the viral replication in primary alveolar macrophages. DNA-binding protein that plays a critical role in nucleoid compaction, genome replication and DNA replication and transcription. Binds to both ssDNA and dsDNA with a binding site covering about 15 nucleotides. Displays DNA-supercoiling activity only when associated with the viral DNA topoisomerase 2. This is Viral histone-like protein from African swine fever virus (strain Badajoz 1971 Vero-adapted) (Ba71V).